A 91-amino-acid chain; its full sequence is MPRSLKKGPFIDLHLLKKIEVAAEKNDRKPVKTWSRRSMILPQMVGLTIAVHNGRLHVPVLVNEDMVGHKLGEFAGTRTYRGHVADKKAKR.

This sequence belongs to the universal ribosomal protein uS19 family.

Functionally, protein S19 forms a complex with S13 that binds strongly to the 16S ribosomal RNA. In Pseudomonas fluorescens (strain SBW25), this protein is Small ribosomal subunit protein uS19.